Consider the following 468-residue polypeptide: Uronate isomerase (468 aa).

This sequence belongs to the metallo-dependent hydrolases superfamily. Uronate isomerase family.

It catalyses the reaction D-glucuronate = D-fructuronate. It carries out the reaction aldehydo-D-galacturonate = keto-D-tagaturonate. Its pathway is carbohydrate metabolism; pentose and glucuronate interconversion. This is Uronate isomerase from Marinomonas sp. (strain MWYL1).